Reading from the N-terminus, the 433-residue chain is Glutamate-1-semialdehyde 2,1-aminomutase (433 aa).

Position 273 is an N6-(pyridoxal phosphate)lysine (Lys-273).

It belongs to the class-III pyridoxal-phosphate-dependent aminotransferase family. HemL subfamily. As to quaternary structure, homodimer. Requires pyridoxal 5'-phosphate as cofactor.

Its subcellular location is the cytoplasm. It carries out the reaction (S)-4-amino-5-oxopentanoate = 5-aminolevulinate. It functions in the pathway porphyrin-containing compound metabolism; protoporphyrin-IX biosynthesis; 5-aminolevulinate from L-glutamyl-tRNA(Glu): step 2/2. Its pathway is porphyrin-containing compound metabolism; chlorophyll biosynthesis. The chain is Glutamate-1-semialdehyde 2,1-aminomutase from Crocosphaera subtropica (strain ATCC 51142 / BH68) (Cyanothece sp. (strain ATCC 51142)).